The sequence spans 363 residues: Suberization-associated anionic peroxidase (363 aa).

An N-terminal signal peptide occupies residues 1–20; it reads MGFRLSHLSLALSFVALALA. N36 carries N-linked (GlcNAc...) asparagine glycosylation. 2 cysteine pairs are disulfide-bonded: C80–C159 and C111–C116. H109 functions as the Proton acceptor in the catalytic mechanism. The Ca(2+) site is built by D110, V113, G115, and D117. N-linked (GlcNAc...) asparagine glycans are attached at residues N126, N161, and N199. 2 cysteine pairs are disulfide-bonded: C166/C352 and C245/C264. P208 contacts substrate. N213 and N225 each carry an N-linked (GlcNAc...) asparagine glycan. H238 is a heme b binding site. T239 provides a ligand contact to Ca(2+). N-linked (GlcNAc...) asparagine glycosylation is present at N263. Ca(2+)-binding residues include D277, T279, and D284.

It belongs to the peroxidase family. Classical plant (class III) peroxidase subfamily. Ca(2+) serves as cofactor. Requires heme b as cofactor.

It localises to the secreted. The catalysed reaction is 2 a phenolic donor + H2O2 = 2 a phenolic radical donor + 2 H2O. Its function is as follows. Removal of H(2)O(2), oxidation of toxic reductants, biosynthesis and degradation of lignin, suberization, auxin catabolism, response to environmental stresses such as wounding, pathogen attack and oxidative stress. These functions might be dependent on each isozyme/isoform in each plant tissue. Suggested to catalyze the deposition of the aromatic residues of suberin on the cell wall and thus play a role in cell-suberization. This is Suberization-associated anionic peroxidase from Solanum tuberosum (Potato).